Here is a 268-residue protein sequence, read N- to C-terminus: AN1-type zinc finger protein 1 (268 aa).

Ala2 is subject to N-acetylalanine. 2 AN1-type zinc fingers span residues Leu4 to Glu52 and Gln58 to Pro106. Zn(2+) contacts are provided by Cys10, Cys15, Cys25, Cys28, Cys33, His36, His42, Cys44, Cys64, Cys69, Cys79, Cys82, Cys87, His90, His96, and Cys98. The segment at Gln160 to Cys260 is ubiquitin-like.

Associates with the 26S proteasome; this association occurs upon exposure to arsenite and is reduced in the presence of ATP. Interacts (via AN1-type 1 and 2 zinc fingers) with PSMD1; this interaction is increased upon arsenite treatment and occurs in an ATP-independent manner. Interacts with PSMC4. Interacts with PSMA1. Interacts (via its ubiquitin-like region) with VCP; this interaction occurs in an arsenite-dependent manner and is necessary for the recruitment of the ubiquitin-selective ATPase VCP to stress granules (SGs).

It localises to the cytoplasm. The protein resides in the stress granule. In terms of biological role, plays a role in the regulation of cytoplasmic stress granules (SGs) turnover. SGs are dynamic and transient cytoplasmic ribonucleoprotein assemblies important for cellular protein homeostasis when protein production is suspended after acute exogenous stress. Associates with SGs and is involved in the efficient and specific arsenite-induced clearance process of SGs through the recruitment of the ubiquitin-selective ATPase VCP and the 26S proteasome. This process requires both complexes for efficient degradation of damaged ubiquitinated SG proteins during recovery from arsenite stress, and hence avoiding aberrant cytoplasmic SGs degradation via autophagy. This is AN1-type zinc finger protein 1 from Homo sapiens (Human).